We begin with the raw amino-acid sequence, 68 residues long: Neuronal regeneration-related protein (68 aa).

The chain is Neuronal regeneration-related protein (NREP) from Gallus gallus (Chicken).